The primary structure comprises 643 residues: UPF0313 protein CLD_0573 (643 aa).

In terms of domain architecture, Radical SAM core spans 295 to 566 (AIKEVKFSIT…RMQRALLQFS (272 aa)). The [4Fe-4S] cluster site is built by Cys-309, Cys-313, and Cys-316. Residues 598–643 (NKPYKKSHKKNNAKNNNNHYNKNNNKNKDISKKNKKNSLSKHKKRK) are disordered. The span at 600-609 (PYKKSHKKNN) shows a compositional bias: basic residues. Residues 610-621 (AKNNNNHYNKNN) show a composition bias toward low complexity. The segment covering 630 to 643 (KNKKNSLSKHKKRK) has biased composition (basic residues).

Belongs to the UPF0313 family. It depends on [4Fe-4S] cluster as a cofactor.

The chain is UPF0313 protein CLD_0573 from Clostridium botulinum (strain Okra / Type B1).